The primary structure comprises 454 residues: Tubulin alpha chain (454 aa).

Residues Q12, D72, S141, G145, T146, T180, N207, and N229 each coordinate GTP. Residue D72 participates in Mg(2+) binding. The active site involves E255.

The protein belongs to the tubulin family. In terms of assembly, dimer of alpha and beta chains. A typical microtubule is a hollow water-filled tube with an outer diameter of 25 nm and an inner diameter of 15 nM. Alpha-beta heterodimers associate head-to-tail to form protofilaments running lengthwise along the microtubule wall with the beta-tubulin subunit facing the microtubule plus end conferring a structural polarity. Microtubules usually have 13 protofilaments but different protofilament numbers can be found in some organisms and specialized cells. Mg(2+) is required as a cofactor.

It localises to the cytoplasm. It is found in the cytoskeleton. It carries out the reaction GTP + H2O = GDP + phosphate + H(+). In terms of biological role, tubulin is the major constituent of microtubules, a cylinder consisting of laterally associated linear protofilaments composed of alpha- and beta-tubulin heterodimers. Microtubules grow by the addition of GTP-tubulin dimers to the microtubule end, where a stabilizing cap forms. Below the cap, tubulin dimers are in GDP-bound state, owing to GTPase activity of alpha-tubulin. This chain is Tubulin alpha chain (TUB1), found in Colletotrichum orbiculare (strain 104-T / ATCC 96160 / CBS 514.97 / LARS 414 / MAFF 240422) (Cucumber anthracnose fungus).